Here is a 129-residue protein sequence, read N- to C-terminus: Prefoldin subunit 6 (129 aa).

Alanine 2 is modified (N-acetylalanine). At lysine 21 the chain carries N6-acetyllysine. Lysine 66 carries the post-translational modification N6-acetyllysine; alternate. Lysine 66 participates in a covalent cross-link: Glycyl lysine isopeptide (Lys-Gly) (interchain with G-Cter in SUMO1); alternate. Lysine 66 participates in a covalent cross-link: Glycyl lysine isopeptide (Lys-Gly) (interchain with G-Cter in SUMO2); alternate.

It belongs to the prefoldin subunit beta family. Heterohexamer of two PFD-alpha type and four PFD-beta type subunits. Component of the PAQosome complex which is responsible for the biogenesis of several protein complexes and which consists of R2TP complex members RUVBL1, RUVBL2, RPAP3 and PIH1D1, URI complex members PFDN2, PFDN6, PDRG1, UXT and URI1 as well as ASDURF, POLR2E and DNAAF10/WDR92.

Binds specifically to cytosolic chaperonin (c-CPN) and transfers target proteins to it. Binds to nascent polypeptide chain and promotes folding in an environment in which there are many competing pathways for nonnative proteins. In Canis lupus familiaris (Dog), this protein is Prefoldin subunit 6 (PFDN6).